Reading from the N-terminus, the 542-residue chain is Esterase 6 (542 aa).

The first 19 residues, 1 to 19 (MNYVGLIIVLSCLWLGSNA), serve as a signal peptide directing secretion. The N-linked (GlcNAc...) asparagine glycan is linked to asparagine 40. Cysteine 84 and cysteine 103 form a disulfide bridge. The active-site Acyl-ester intermediate is the serine 207. The cysteines at positions 259 and 271 are disulfide-linked. Asparagine 418 and asparagine 454 each carry an N-linked (GlcNAc...) asparagine glycan. Residue histidine 464 is the Charge relay system of the active site. Cysteine 512 and cysteine 533 form a disulfide bridge.

This sequence belongs to the type-B carboxylesterase/lipase family. Monomer.

The protein localises to the secreted. The catalysed reaction is a carboxylic ester + H2O = an alcohol + a carboxylate + H(+). Transferred from the ejaculatory bulbs of males to the female genitals upon copulation, plays an important role in the reproductive biology. This chain is Esterase 6 (Est-6), found in Drosophila simulans (Fruit fly).